Reading from the N-terminus, the 213-residue chain is FMN-dependent NADH:quinone oxidoreductase (213 aa).

S17 to S19 lines the FMN pocket.

It belongs to the azoreductase type 1 family. Homodimer. FMN serves as cofactor.

The catalysed reaction is 2 a quinone + NADH + H(+) = 2 a 1,4-benzosemiquinone + NAD(+). It carries out the reaction N,N-dimethyl-1,4-phenylenediamine + anthranilate + 2 NAD(+) = 2-(4-dimethylaminophenyl)diazenylbenzoate + 2 NADH + 2 H(+). In terms of biological role, quinone reductase that provides resistance to thiol-specific stress caused by electrophilic quinones. Functionally, also exhibits azoreductase activity. Catalyzes the reductive cleavage of the azo bond in aromatic azo compounds to the corresponding amines. The polypeptide is FMN-dependent NADH:quinone oxidoreductase (Ruminiclostridium cellulolyticum (strain ATCC 35319 / DSM 5812 / JCM 6584 / H10) (Clostridium cellulolyticum)).